The primary structure comprises 120 residues: Non-specific lipid-transfer protein (120 aa).

The N-terminal stretch at 1–26 (MASSMSLKLACVVVLCMVVGAPLAQG) is a signal peptide. Disulfide bonds link Cys-40–Cys-56, Cys-57–Cys-102, and Cys-77–Cys-116.

This sequence belongs to the plant LTP family.

In terms of biological role, plant non-specific lipid-transfer proteins transfer phospholipids as well as galactolipids across membranes. May play a role in wax or cutin deposition in the cell walls of expanding epidermal cells and certain secretory tissues. The chain is Non-specific lipid-transfer protein from Gossypium hirsutum (Upland cotton).